Reading from the N-terminus, the 89-residue chain is Sec translocon accessory complex subunit YrbF (89 aa).

Residues 4–24 traverse the membrane as a helical segment; that stretch reads GTLGTLVPIILMFAVLYFLLI.

It belongs to the YajC family. Part of the SecDF-YidC-YajC translocase complex. The SecDF-YidC-YajC translocase forms a supercomplex with SecYEG, called the holo-translocon (HTL).

It localises to the cell membrane. Functionally, the SecYEG-SecDF-YajC-YidC holo-translocon (HTL) protein secretase/insertase is a supercomplex required for protein secretion, insertion of proteins into membranes, and assembly of membrane protein complexes. While the SecYEG complex is essential for assembly of a number of proteins and complexes, the SecDF-YajC-YidC subcomplex facilitates these functions. This is Sec translocon accessory complex subunit YrbF (yrbF) from Bacillus subtilis (strain 168).